The primary structure comprises 127 residues: Photosystem II extrinsic protein U (127 aa).

A signal peptide spans 1–31; that stretch reads MSRLFRRLSTLLLCSLLVLGVWLTQPLSVQA.

It belongs to the PsbU family. In terms of assembly, PSII is composed of 1 copy each of membrane proteins PsbA, PsbB, PsbC, PsbD, PsbE, PsbF, PsbH, PsbI, PsbJ, PsbK, PsbL, PsbM, PsbT, PsbX, PsbY, PsbZ, Psb30/Ycf12, peripheral proteins PsbO, CyanoQ (PsbQ), PsbU, PsbV and a large number of cofactors. It forms dimeric complexes.

The protein resides in the cellular thylakoid membrane. In terms of biological role, one of the extrinsic, lumenal subunits of photosystem II (PSII). PSII is a light-driven water plastoquinone oxidoreductase, using light energy to abstract electrons from H(2)O, generating a proton gradient subsequently used for ATP formation. The extrinsic proteins stabilize the structure of photosystem II oxygen-evolving complex (OEC), the ion environment of oxygen evolution and protect the OEC against heat-induced inactivation. This Synechococcus sp. (strain RCC307) protein is Photosystem II extrinsic protein U.